We begin with the raw amino-acid sequence, 167 residues long: Crossover junction endodeoxyribonuclease RuvC (167 aa).

Active-site residues include Asp11, Glu71, and Asp143. Asp11, Glu71, and Asp143 together coordinate Mg(2+).

Belongs to the RuvC family. Homodimer which binds Holliday junction (HJ) DNA. The HJ becomes 2-fold symmetrical on binding to RuvC with unstacked arms; it has a different conformation from HJ DNA in complex with RuvA. In the full resolvosome a probable DNA-RuvA(4)-RuvB(12)-RuvC(2) complex forms which resolves the HJ. Requires Mg(2+) as cofactor.

The protein resides in the cytoplasm. It catalyses the reaction Endonucleolytic cleavage at a junction such as a reciprocal single-stranded crossover between two homologous DNA duplexes (Holliday junction).. Its function is as follows. The RuvA-RuvB-RuvC complex processes Holliday junction (HJ) DNA during genetic recombination and DNA repair. Endonuclease that resolves HJ intermediates. Cleaves cruciform DNA by making single-stranded nicks across the HJ at symmetrical positions within the homologous arms, yielding a 5'-phosphate and a 3'-hydroxyl group; requires a central core of homology in the junction. The consensus cleavage sequence is 5'-(A/T)TT(C/G)-3'. Cleavage occurs on the 3'-side of the TT dinucleotide at the point of strand exchange. HJ branch migration catalyzed by RuvA-RuvB allows RuvC to scan DNA until it finds its consensus sequence, where it cleaves and resolves the cruciform DNA. The sequence is that of Crossover junction endodeoxyribonuclease RuvC from Hyphomonas neptunium (strain ATCC 15444).